Consider the following 396-residue polypeptide: Elongation factor Tu (396 aa).

The 197-residue stretch at 10–206 folds into the tr-type G domain; the sequence is KPHVNVGTIG…ALDTYIPEPE (197 aa). Residues 19–26 are G1; the sequence is GHVDHGKT. 19–26 lines the GTP pocket; the sequence is GHVDHGKT. Position 26 (Thr-26) interacts with Mg(2+). The interval 60–64 is G2; the sequence is GITIN. The tract at residues 81-84 is G3; the sequence is DCPG. GTP is bound by residues 81–85 and 136–139; these read DCPGH and NKAD. Residues 136–139 are G4; that stretch reads NKAD. Residues 174–176 are G5; sequence SAL.

Belongs to the TRAFAC class translation factor GTPase superfamily. Classic translation factor GTPase family. EF-Tu/EF-1A subfamily. As to quaternary structure, monomer.

It localises to the cytoplasm. It carries out the reaction GTP + H2O = GDP + phosphate + H(+). In terms of biological role, GTP hydrolase that promotes the GTP-dependent binding of aminoacyl-tRNA to the A-site of ribosomes during protein biosynthesis. This Thiobacillus denitrificans (strain ATCC 25259 / T1) protein is Elongation factor Tu.